The sequence spans 729 residues: Catalase-peroxidase (729 aa).

The segment at residues 95-217 (WHSAGTYRIT…LAAVQMGLIY (123 aa)) is a cross-link (tryptophyl-tyrosyl-methioninium (Trp-Tyr) (with M-243)). Residue His-96 is the Proton acceptor of the active site. The tryptophyl-tyrosyl-methioninium (Tyr-Met) (with W-95) cross-link spans 217–243 (YVNPEGPNGKPDPIAAATDIRETFFRM). His-258 is a binding site for heme b.

This sequence belongs to the peroxidase family. Peroxidase/catalase subfamily. In terms of assembly, homodimer or homotetramer. The cofactor is heme b. In terms of processing, formation of the three residue Trp-Tyr-Met cross-link is important for the catalase, but not the peroxidase activity of the enzyme.

The enzyme catalyses H2O2 + AH2 = A + 2 H2O. The catalysed reaction is 2 H2O2 = O2 + 2 H2O. Its function is as follows. Bifunctional enzyme with both catalase and broad-spectrum peroxidase activity. This chain is Catalase-peroxidase, found in Nitrobacter hamburgensis (strain DSM 10229 / NCIMB 13809 / X14).